The primary structure comprises 296 residues: MLDTLQKHGHCEVDTARIYGFGSTEEHLAQLKWQERGIAVGTKLTAKKIGPKEYSHKKESLKPGLSESLKALGSERVDTFYLHTPDHNTPYAETLEAVNELYKAGYFKKFGICNYAAWEVAQICELCNANGWKKPDIYQGAYSALQRNIETELFPCLRYYGISFYSFSPLAGGMLTDRYGRETSEYEGGNRFDPNNARGFYRKLYWNEPTFAALDIIRPLAQKHGMTTTKAALRWISHHSAMKGDKGDAVVIGSSSAEQLESNLSNLEKGPLPEDLVQAFEEAWSVVKVNTAPYFA.

Asp-14 contributes to the NADP(+) binding site. Tyr-19 acts as the Proton donor in catalysis. His-83 serves as a coordination point for substrate. Residues 113-114 (CN), Gln-139, 168-178 (SPLAGGMLTDR), and Arg-191 contribute to the NADP(+) site. Tyr-201 is a binding site for substrate. 255–263 (SSAEQLESN) contributes to the NADP(+) binding site.

It belongs to the aldo/keto reductase family. Aldo/keto reductase 2 subfamily.

It participates in secondary metabolite biosynthesis. Functionally, aldo-keto reductase; part of the gene cluster that mediates the biosynthesis of an emodin derivative that may be involved in black Sigatoka disease of banana. The pathway begins with the synthesis of atrochrysone thioester by the polyketide synthase PKS8-1. The atrochrysone carboxyl ACP thioesterase MYCFIDRAFT_190111 then breaks the thioester bond and releases the atrochrysone carboxylic acid from PKS8-1. The decarboxylase MYCFIDRAFT_34057 then catalyzes the concerted decarboxylation-elimination required to convert atochrysone carboxylic acid into emodin anthrone, which is further oxidized to emodin by the anthrone oxygenase MYCFIDRAFT_34418. The functions of the other tailoring enzymes as well as the final product of the cluster have still to be identified. The polypeptide is Aldo-keto reductase MYCFIDRAFT_156381 (Pseudocercospora fijiensis (strain CIRAD86) (Black leaf streak disease fungus)).